The sequence spans 97 residues: Putative septation protein SpoVG (97 aa).

This sequence belongs to the SpoVG family.

Its function is as follows. Essential for sporulation. Interferes with or is a negative regulator of the pathway leading to asymmetric septation. The protein is Putative septation protein SpoVG of Bacillus licheniformis (strain ATCC 14580 / DSM 13 / JCM 2505 / CCUG 7422 / NBRC 12200 / NCIMB 9375 / NCTC 10341 / NRRL NRS-1264 / Gibson 46).